The following is a 427-amino-acid chain: ATP-sensitive inward rectifier potassium channel 12 (427 aa).

The Cytoplasmic segment spans residues 1–77 (MTAASRANPY…LADMFTTCVD (77 aa)). Cysteine 75 carries the post-translational modification S-nitrosocysteine. The chain crosses the membrane as a helical span at residues 78-104 (IRWRYMLLIFSLAFLASWLLFGIIFWV). A 1,2-diacyl-sn-glycero-3-phospho-(1D-myo-inositol-4,5-bisphosphate) is bound by residues arginine 79 and arginine 81. Residues 105 to 129 (IAVAHGDLEPAEGRGRTPCVLQVHG) are Extracellular-facing. Cysteine 123 and cysteine 155 are joined by a disulfide. The segment at residues 130–146 (FMAAFLFSIETQTTIGY) is an intramembrane region (helical; Pore-forming). Threonine 143, isoleucine 144, glycine 145, and tyrosine 146 together coordinate K(+). The short motif at 143-148 (TIGYGL) is the Selectivity filter element. Topologically, residues 147–155 (GLRCVTEEC) are extracellular. A helical transmembrane segment spans residues 156–183 (PVAVFMVVAQSIVGCIIDSFMIGAIMAK). Residues lysine 183 and lysine 188 each coordinate a 1,2-diacyl-sn-glycero-3-phospho-(1D-myo-inositol-4,5-bisphosphate). The Cytoplasmic segment spans residues 184-427 (MARPKKRAQT…ERPYRRESEI (244 aa)). Residues 387–427 (DEEDEVATDRDGRSPQPEHDFDRLQASSAALERPYRRESEI) are disordered. A compositionally biased stretch (basic and acidic residues) spans 393–409 (ATDRDGRSPQPEHDFDR). A PDZ-binding motif is present at residues 425–427 (SEI).

Belongs to the inward rectifier-type potassium channel (TC 1.A.2.1) family. KCNJ12 subfamily. As to quaternary structure, homotetramer. Forms heteromer with KCNJ4. Can form heteromeric channels with Kir2.6/KCNJ18. Association, via its PDZ-recognition domain, with LIN7A, LIN7B, LIN7C, DLG1, CASK and APBA1 plays a key role in its localization and trafficking. As to expression, highest level in cerebellum.

The protein localises to the membrane. The protein resides in the cell membrane. Its subcellular location is the sarcolemma. It localises to the T-tubule. It catalyses the reaction K(+)(in) = K(+)(out). Activated by phosphatidylinositol 4,5-biphosphate (PtdIns(4,5)P2). PtdIns(4,5)P2 binding to the cytoplasmic side of the channel triggers a conformation change leading to channel opening. Inhibited by Ba(2+). Functionally, inward rectifying potassium channel that probably participates in controlling the resting membrane potential in electrically excitable cells. It probably participates in establishing action potential waveform and excitability of neuronal and muscle tissues. Inward rectifier potassium channels are characterized by a greater tendency to allow potassium to flow into the cell rather than out of it. Their voltage dependence is regulated by the concentration of extracellular potassium; as external potassium is raised, the voltage range of the channel opening shifts to more positive voltages. The inward rectification is mainly due to the blockage of outward current by internal magnesium. This is ATP-sensitive inward rectifier potassium channel 12 (Kcnj12) from Mus musculus (Mouse).